The sequence spans 422 residues: Enolase 2 (422 aa).

Glutamine 162 contributes to the (2R)-2-phosphoglycerate binding site. Catalysis depends on glutamate 204, which acts as the Proton donor. Aspartate 241, glutamate 285, and aspartate 312 together coordinate Mg(2+). The (2R)-2-phosphoglycerate site is built by lysine 337, arginine 366, serine 367, and lysine 388. Lysine 337 serves as the catalytic Proton acceptor.

It belongs to the enolase family. Mg(2+) serves as cofactor.

It localises to the cytoplasm. The protein localises to the secreted. Its subcellular location is the cell surface. The catalysed reaction is (2R)-2-phosphoglycerate = phosphoenolpyruvate + H2O. It participates in carbohydrate degradation; glycolysis; pyruvate from D-glyceraldehyde 3-phosphate: step 4/5. Its function is as follows. Catalyzes the reversible conversion of 2-phosphoglycerate (2-PG) into phosphoenolpyruvate (PEP). It is essential for the degradation of carbohydrates via glycolysis. The polypeptide is Enolase 2 (Lactococcus lactis subsp. lactis (strain IL1403) (Streptococcus lactis)).